The primary structure comprises 347 residues: MDCSFSADIQTRIDNKTKPLGALGVLEKVALQLALIQSQDQAQAVEEIVIRKPTMLVFAGDHGVAKEGISIAPSEVTQQMVANFLAGGAAINCFCDVNQIEFKVIDCGMLAPIEVMVPEFKSHPNLIEQRLGNGTANFSKQAAMSSEQVALGLEYGARVAQSTIYSGSNLLMFGEMGIGNTSSASALLAALSPLEVNHCVGLGTGINSEQLSRKLKLVAQGVSRCRGLDAKAVLSQVGGFEIVQMVGAFLEAKRLKTPVLVDGFIVSVAAYVATLLDEETRDYMLFAHRSEENGHKFVLESLKAEPLLDLGLRLGEGTGAALALPLLKAAAQFYNKMASFESAGVTV.

Glu316 acts as the Proton acceptor in catalysis.

Belongs to the CobT family.

It catalyses the reaction 5,6-dimethylbenzimidazole + nicotinate beta-D-ribonucleotide = alpha-ribazole 5'-phosphate + nicotinate + H(+). Its pathway is nucleoside biosynthesis; alpha-ribazole biosynthesis; alpha-ribazole from 5,6-dimethylbenzimidazole: step 1/2. Its function is as follows. Catalyzes the synthesis of alpha-ribazole-5'-phosphate from nicotinate mononucleotide (NAMN) and 5,6-dimethylbenzimidazole (DMB). The sequence is that of Nicotinate-nucleotide--dimethylbenzimidazole phosphoribosyltransferase from Vibrio parahaemolyticus serotype O3:K6 (strain RIMD 2210633).